Consider the following 264-residue polypeptide: Carbonic anhydrase 7 (264 aa).

In terms of domain architecture, Alpha-carbonic anhydrase spans 5 to 262 (HCWGYGQDDG…LKGRVVKASF (258 aa)). H66 serves as the catalytic Proton donor/acceptor. 3 residues coordinate Zn(2+): H96, H98, and H121. 201–202 (TT) is a substrate binding site.

The protein belongs to the alpha-carbonic anhydrase family. Zn(2+) is required as a cofactor.

It is found in the cytoplasm. The enzyme catalyses hydrogencarbonate + H(+) = CO2 + H2O. In terms of biological role, reversible hydration of carbon dioxide. This Mus musculus (Mouse) protein is Carbonic anhydrase 7 (Ca7).